A 62-amino-acid polypeptide reads, in one-letter code: Large ribosomal subunit protein uL29 (62 aa).

It belongs to the universal ribosomal protein uL29 family.

This is Large ribosomal subunit protein uL29 from Geobacter sulfurreducens (strain ATCC 51573 / DSM 12127 / PCA).